The following is a 1061-amino-acid chain: MPGPRRPAGSRLRLLLLLLLPPLLLLLRGSHAGNLTVAVVLPLANTSYPWSWARVGPAVELALAQVKARPDLLPGWTVRTVLGSSENALGVCSDTAAPLAAVDLKWEHNPAVFLGPGCVYAAAPVGRFTAHWRVPLLTAGAPALGFGVKDEYALTTRAGPSYAKLGDFVAALHRRLGWERQALMLYAYRPGDEEHCFFLVEGLFMRVRDRLNITVDHLEFAEDDLSHYTRLLRTMPRKGRVIYICSSPDAFRTLMLLALEAGLCGEDYVFFHLDIFGQSLQGGQGPAPRRPWERGDGQDVSARQAFQAAKIITYKDPDNPEYLEFLKQLKHLAYEQFNFTMEDGLVNTIPASFHDGLLLYIQAVTETLAHGGTVTDGENITQRMWNRSFQGVTGYLKIDSSGDRETDFSLWDMDPENGAFRVVLNYNGTSQELVAVSGRKLNWPLGYPPPDIPKCGFDNEDPACNQDHLSTLEVLALVGSLSLLGILIVSFFIYRKMQLEKELASELWRVRWEDVEPSSLERHLRSAGSRLTLSGRGSNYGSLLTTEGQFQVFAKTAYYKGNLVAVKRVNRKRIELTRKVLFELKHMRDVQNEHLTRFVGACTDPPNICILTEYCPRGSLQDILENESITLDWMFRYSLTNDIVKGMLFLHNGAICSHGNLKSSNCVVDGRFVLKITDYGLESFRDLDPEQGHTVYAKKLWTAPELLRMASPPVRGSQAGDVYSFGIILQEIALRSGVFHVEGLDLSPKEIIERVTRGEQPPFRPSLALQSHLEELGLLMQRCWAEDPQERPPFQQIRLTLRKFNRENSSNILDNLLSRMEQYANNLEELVEERTQAYLEEKRKAEALLYQILPHSVAEQLKRGETVQAEAFDSVTIYFSDIVGFTALSAESTPMQVVTLLNDLYTCFDAVIDNFDVYKVETIGDAYMVVSGLPVRNGRLHACEVARMALALLDAVRSFRIRHRPQEQLRLRIGIHTGPVCAGVVGLKMPRYCLFGDTVNTASRMESNGEALKIHLSSETKAVLEEFGGFELELRGDVEMKGKGKVRTYWLLGERGSSTRG.

A signal peptide spans 1–32 (MPGPRRPAGSRLRLLLLLLLPPLLLLLRGSHA). Topologically, residues 33–473 (GNLTVAVVLP…CNQDHLSTLE (441 aa)) are extracellular. Residues Asn34 and Asn45 are each glycosylated (N-linked (GlcNAc...) asparagine). Chloride-binding residues include Ser85, Gly117, and Cys118. 2 cysteine pairs are disulfide-bonded: Cys92/Cys118 and Cys196/Cys245. N-linked (GlcNAc...) asparagine glycosylation is found at Asn212, Asn338, Asn379, Asn386, and Asn427. A disulfide bridge connects residues Cys455 and Cys464. A helical transmembrane segment spans residues 474-494 (VLALVGSLSLLGILIVSFFIY). Residues 495-1061 (RKMQLEKELA…LGERGSSTRG (567 aa)) lie on the Cytoplasmic side of the membrane. Ser519 and Ser529 each carry phosphoserine. The Protein kinase domain maps to 528 to 805 (GSRLTLSGRG…QIRLTLRKFN (278 aa)). Residue Thr532 is modified to Phosphothreonine. 3 positions are modified to phosphoserine: Ser534, Ser538, and Ser542. The residue at position 545 (Thr545) is a Phosphothreonine. Positions 876 to 1006 (TIYFSDIVGF…DTVNTASRME (131 aa)) constitute a Guanylate cyclase domain.

This sequence belongs to the adenylyl cyclase class-4/guanylyl cyclase family. As to quaternary structure, homodimer. Phosphorylation of the protein kinase-like domain is required for full activation by ANP.

Its subcellular location is the membrane. It carries out the reaction GTP = 3',5'-cyclic GMP + diphosphate. In terms of biological role, receptor for the atrial natriuretic peptide NPPA/ANP and the brain natriuretic peptide NPPB/BNP which are potent vasoactive hormones playing a key role in cardiovascular homeostasis. Plays an essential role in the regulation of endothelial cell senescence and vascular aging. Upon activation by ANP or BNP, stimulates the production of cyclic guanosine monophosphate (cGMP) that promotes vascular tone and volume homeostasis by activation of protein kinase cGMP-dependent 1/PRKG1 and subsequently PRKAA1, thereby controlling blood pressure and maintaining cardiovascular homeostasis. This Homo sapiens (Human) protein is Atrial natriuretic peptide receptor 1.